The sequence spans 250 residues: MLRANGRGLRELRPVTIERHYLKYAEGSALITVGDTRVICSATVEEKVPPFLKNTGKGWITAEYSLLPRSTKERTIREVTRGRLTGRTQEIQRLIGRSLRSVVDMSLLGERTIWLDCDVLQADGGTRTAAITGSFVALAEALAGLVAAGGVPAMPLKDFLAAVSVGLVDDELILDLDFQEDSHAGVDMNVVMTGSGQLVEVQGTAEGRPFTREQLTAMLDLAGEGIESLIAIQKQVLGDIASRVGTGNDK.

Phosphate is bound by residues R87 and 125–127; that span reads GTR.

This sequence belongs to the RNase PH family. In terms of assembly, homohexameric ring arranged as a trimer of dimers.

The enzyme catalyses tRNA(n+1) + phosphate = tRNA(n) + a ribonucleoside 5'-diphosphate. Phosphorolytic 3'-5' exoribonuclease that plays an important role in tRNA 3'-end maturation. Removes nucleotide residues following the 3'-CCA terminus of tRNAs; can also add nucleotides to the ends of RNA molecules by using nucleoside diphosphates as substrates, but this may not be physiologically important. Probably plays a role in initiation of 16S rRNA degradation (leading to ribosome degradation) during starvation. The sequence is that of Ribonuclease PH from Moorella thermoacetica (strain ATCC 39073 / JCM 9320).